The primary structure comprises 912 residues: Protein translocase subunit SecA (912 aa).

ATP is bound by residues Q87, 105-109 (GEGKT), and D508. A disordered region spans residues 864–912 (AEEEVEQMQGGNAPVPVSQVTRDEPKVGRNDPCPCGSGKKYKHCHGQLS). Zn(2+)-binding residues include C896, C898, C907, and H908. A compositionally biased stretch (basic residues) spans 902–912 (KKYKHCHGQLS).

This sequence belongs to the SecA family. Monomer and homodimer. Part of the essential Sec protein translocation apparatus which comprises SecA, SecYEG and auxiliary proteins SecDF-YajC and YidC. Requires Zn(2+) as cofactor.

The protein resides in the cell inner membrane. The protein localises to the cytoplasm. The catalysed reaction is ATP + H2O + cellular proteinSide 1 = ADP + phosphate + cellular proteinSide 2.. Part of the Sec protein translocase complex. Interacts with the SecYEG preprotein conducting channel. Has a central role in coupling the hydrolysis of ATP to the transfer of proteins into and across the cell membrane, serving both as a receptor for the preprotein-SecB complex and as an ATP-driven molecular motor driving the stepwise translocation of polypeptide chains across the membrane. In Xanthomonas euvesicatoria pv. vesicatoria (strain 85-10) (Xanthomonas campestris pv. vesicatoria), this protein is Protein translocase subunit SecA.